Consider the following 321-residue polypeptide: MSAEQKYFENAQNVHFTLADGSKIPGLGLGTWRSEPNQTKNAVKTALQYGYRHIDAAAIYGNEDEVGDGIKESGVPRKDIWVTSKLWCNAHAPEAVPKALEKTLKDLKLDYLDEYLIHWPVSFKTGEDKFPKDKDGNLIYEKNPIEETWKAMEKLLETGKVRHIGLSNFNDTNLERILKVAKVKPAVHQMELHPFLPQTEFVEKHKKLGIHVTAYSPFGNQNTIYESKIPKLIEHETIQKIAKSKGEGVTGATIAVSWAITRGTSVIPKSVNEQRIKSNFKYIPLTKEDMDEINSIGIRARFNQATFSNEPVFAGLEDGRT.

Residue Tyr-60 is the Proton donor of the active site. Position 118 (His-118) interacts with substrate.

Belongs to the aldo/keto reductase family.

This is an uncharacterized protein from Schizosaccharomyces pombe (strain 972 / ATCC 24843) (Fission yeast).